The following is a 273-amino-acid chain: Phosphate import ATP-binding protein PstB (273 aa).

Positions 19-258 (ISIQNVTISY…FNETEKIFNS (240 aa)) constitute an ABC transporter domain. 51-58 (GPSGCGKS) contributes to the ATP binding site.

Belongs to the ABC transporter superfamily. Phosphate importer (TC 3.A.1.7) family. The complex is composed of two ATP-binding proteins (PstB), two transmembrane proteins (PstC and PstA) and a solute-binding protein (PstS).

Its subcellular location is the cell inner membrane. It catalyses the reaction phosphate(out) + ATP + H2O = ADP + 2 phosphate(in) + H(+). Part of the ABC transporter complex PstSACB involved in phosphate import. Responsible for energy coupling to the transport system. This chain is Phosphate import ATP-binding protein PstB, found in Parasynechococcus marenigrum (strain WH8102).